Here is a 1222-residue protein sequence, read N- to C-terminus: ATP-dependent helicase/nuclease subunit A (1222 aa).

The UvrD-like helicase ATP-binding domain occupies 39–495; it reads QKRTAQQIEA…ILLKENFRSQ (457 aa). 60-67 is a binding site for ATP; the sequence is ASAGSGKT. Residues 524–810 form the UvrD-like helicase C-terminal domain; it reads QLIAGSHAQT…NLMTIHKSKG (287 aa).

It belongs to the helicase family. AddA subfamily. Heterodimer of AddA and AddB/RexB. The cofactor is Mg(2+).

It catalyses the reaction Couples ATP hydrolysis with the unwinding of duplex DNA by translocating in the 3'-5' direction.. The enzyme catalyses ATP + H2O = ADP + phosphate + H(+). Its function is as follows. The heterodimer acts as both an ATP-dependent DNA helicase and an ATP-dependent, dual-direction single-stranded exonuclease. Recognizes the chi site generating a DNA molecule suitable for the initiation of homologous recombination. The AddA nuclease domain is required for chi fragment generation; this subunit has the helicase and 3' -&gt; 5' nuclease activities. This chain is ATP-dependent helicase/nuclease subunit A, found in Streptococcus pyogenes serotype M3 (strain ATCC BAA-595 / MGAS315).